A 32-amino-acid polypeptide reads, in one-letter code: QSISCAESCVWIPCATSLIGCSCVNSRCIYSK.

Q1 bears the Pyrrolidone carboxylic acid mark. 3 disulfides stabilise this stretch: C5/C21, C9/C23, and C14/C28.

In terms of processing, contains 3 disulfide bonds. In terms of tissue distribution, expressed in midvein, lamina and periphery of leaves (at protein level).

Its function is as follows. Probably participates in a plant defense mechanism. The chain is Acyclotide phyb-M from Petunia hybrida (Petunia).